Reading from the N-terminus, the 421-residue chain is General transcription factor IIH subunit 2 (421 aa).

The interval 1 to 26 (MSNQRKRSNDEREEEDDEDAEGIGEW) is disordered. Over residues 11-24 (EREEEDDEDAEGIG) the composition is skewed to acidic residues. A VWFA domain is found at 83–272 (YLYIVIDFSR…IAEFAIANLI (190 aa)). The RING-type zinc-finger motif lies at 362–408 (CFGCQQSLIGAGNKPVPCVTCRKCKHYFCLDCDIYIHESLHNCPGCE).

It belongs to the GTF2H2 family. In terms of assembly, component of the 7-subunit TFIIH core complex composed of XPB, XPD, TFB1/GTF2H1, GTF2H2/P44, TFB4/GTF2H3, TFB2/GTF2H4 and TFB5/GTF2H5, which is active in NER. The core complex associates with the 3-subunit CDK-activating kinase (CAK) module composed of CYCH1/cyclin H1, CDKD and MAT1/At4g30820 to form the 10-subunit holoenzyme (holo-TFIIH) active in transcription. Interacts with XPD.

It is found in the nucleus. Component of the general transcription and DNA repair factor IIH (TFIIH) core complex, which is involved in general and transcription-coupled nucleotide excision repair (NER) of damaged DNA and, when complexed to CAK, in RNA transcription by RNA polymerase II. In NER, TFIIH acts by opening DNA around the lesion to allow the excision of the damaged oligonucleotide and its replacement by a new DNA fragment. In transcription, TFIIH has an essential role in transcription initiation. When the pre-initiation complex (PIC) has been established, TFIIH is required for promoter opening and promoter escape. Phosphorylation of the C-terminal tail (CTD) of the largest subunit of RNA polymerase II by the kinase module CAK controls the initiation of transcription. Can restore UV resistance in the NER-deficient ssl1-1 yeast mutant. The sequence is that of General transcription factor IIH subunit 2 from Arabidopsis thaliana (Mouse-ear cress).